We begin with the raw amino-acid sequence, 323 residues long: NADH-ubiquinone oxidoreductase chain 1 (323 aa).

Transmembrane regions (helical) follow at residues 8–28 (VINP…LTLL), 74–94 (FLFL…WAPM), 105–125 (LGVL…LGSG), 145–165 (ISYE…TGGF), 176–196 (SIWL…STLA), 236–256 (ILLM…IPAF), 258–278 (ELTA…FLWV), and 298–318 (FLPL…ALAG).

It belongs to the complex I subunit 1 family.

The protein localises to the mitochondrion inner membrane. It catalyses the reaction a ubiquinone + NADH + 5 H(+)(in) = a ubiquinol + NAD(+) + 4 H(+)(out). Functionally, core subunit of the mitochondrial membrane respiratory chain NADH dehydrogenase (Complex I) that is believed to belong to the minimal assembly required for catalysis. Complex I functions in the transfer of electrons from NADH to the respiratory chain. The immediate electron acceptor for the enzyme is believed to be ubiquinone. In Oncorhynchus mykiss (Rainbow trout), this protein is NADH-ubiquinone oxidoreductase chain 1 (MT-ND1).